We begin with the raw amino-acid sequence, 356 residues long: Phosphoribosylformylglycinamidine cyclo-ligase (356 aa).

It belongs to the AIR synthase family.

Its subcellular location is the cytoplasm. The enzyme catalyses 2-formamido-N(1)-(5-O-phospho-beta-D-ribosyl)acetamidine + ATP = 5-amino-1-(5-phospho-beta-D-ribosyl)imidazole + ADP + phosphate + H(+). The protein operates within purine metabolism; IMP biosynthesis via de novo pathway; 5-amino-1-(5-phospho-D-ribosyl)imidazole from N(2)-formyl-N(1)-(5-phospho-D-ribosyl)glycinamide: step 2/2. This chain is Phosphoribosylformylglycinamidine cyclo-ligase, found in Sinorhizobium fredii (strain NBRC 101917 / NGR234).